The following is a 669-amino-acid chain: Dynamin-related protein 4C (669 aa).

The interval 1-21 is disordered; that stretch reads MVKKKVATKKNSPSLAIAKKK. Residues 62–323 enclose the Dynamin-type G domain; the sequence is GIHLPTIVVV…QSSMIARCLP (262 aa). The tract at residues 72 to 79 is G1 motif; the sequence is GDQSSGKS. GTP is bound at residue 72-79; sequence GDQSSGKS. A G2 motif region spans residues 97-99; the sequence is CTR. A G3 motif region spans residues 171-174; sequence DLPG. GTP is bound by residues 171 to 175 and 240 to 243; these read DLPGI and TKAD. The segment at 240–243 is G4 motif; it reads TKAD. A region of interest (G5 motif) is located at residue E273. In terms of domain architecture, GED spans 575-669; sequence AFDMKMRITS…AVAAIVDQNC (95 aa).

This sequence belongs to the TRAFAC class dynamin-like GTPase superfamily. Dynamin/Fzo/YdjA family.

It localises to the cytoplasm. The protein localises to the cytoskeleton. Its function is as follows. Putative microtubule-associated force-producing protein, able to bind and hydrolyze GTP. This is Dynamin-related protein 4C (DRP4C) from Arabidopsis thaliana (Mouse-ear cress).